Reading from the N-terminus, the 288-residue chain is Cyclin-dependent kinase 2 homolog (288 aa).

The Protein kinase domain occupies 4-284; it reads YHGLEKIGEG…AKQAIEHPYF (281 aa). ATP contacts are provided by residues 10-18 and K32; that span reads IGEGTYGVV. T14 bears the Phosphothreonine mark. The residue at position 15 (Y15) is a Phosphotyrosine. D125 (proton acceptor) is an active-site residue. T158 is subject to Phosphothreonine.

This sequence belongs to the protein kinase superfamily. CMGC Ser/Thr protein kinase family. CDC2/CDKX subfamily. In terms of assembly, may form a complex composed of at least the catalytic subunit CRK2 and a cyclin. The cofactor is Mg(2+).

It is found in the cytoplasm. It carries out the reaction L-seryl-[protein] + ATP = O-phospho-L-seryl-[protein] + ADP + H(+). The enzyme catalyses L-threonyl-[protein] + ATP = O-phospho-L-threonyl-[protein] + ADP + H(+). The catalysed reaction is [DNA-directed RNA polymerase] + ATP = phospho-[DNA-directed RNA polymerase] + ADP + H(+). Phosphorylation at Thr-14 or Tyr-15 inactivates the enzyme, while phosphorylation at Thr-158 activates it. Its function is as follows. Serine/threonine-protein kinase. Involved in the control of the cell cycle. Required for entry into S-phase and mitosis. Probable component of the kinase complex that phosphorylates the repetitive C-terminus of RNA polymerase II. This chain is Cyclin-dependent kinase 2 homolog, found in Plasmodium berghei (strain Anka).